Consider the following 473-residue polypeptide: Photosystem II CP43 reaction center protein (473 aa).

A propeptide spanning residues 1-14 (MKTLYSLRRFYHVE) is cleaved from the precursor. Threonine 15 is subject to N-acetylthreonine. Threonine 15 carries the post-translational modification Phosphothreonine. The next 5 helical transmembrane spans lie at 69–93 (LFEV…PHLA), 134–155 (LLGP…KDRN), 178–200 (KALY…RKIT), 255–275 (KPFA…LSYS), and 291–312 (WFNN…ASQA). Glutamate 367 lines the [CaMn4O5] cluster pocket. A helical membrane pass occupies residues 447–471 (RARAAAAGFEKGIDRDLEPVLFMTP).

The protein belongs to the PsbB/PsbC family. PsbC subfamily. As to quaternary structure, PSII is composed of 1 copy each of membrane proteins PsbA, PsbB, PsbC, PsbD, PsbE, PsbF, PsbH, PsbI, PsbJ, PsbK, PsbL, PsbM, PsbT, PsbX, PsbY, PsbZ, Psb30/Ycf12, at least 3 peripheral proteins of the oxygen-evolving complex and a large number of cofactors. It forms dimeric complexes. Binds multiple chlorophylls and provides some of the ligands for the Ca-4Mn-5O cluster of the oxygen-evolving complex. It may also provide a ligand for a Cl- that is required for oxygen evolution. PSII binds additional chlorophylls, carotenoids and specific lipids. serves as cofactor.

It localises to the plastid. The protein localises to the chloroplast thylakoid membrane. Functionally, one of the components of the core complex of photosystem II (PSII). It binds chlorophyll and helps catalyze the primary light-induced photochemical processes of PSII. PSII is a light-driven water:plastoquinone oxidoreductase, using light energy to abstract electrons from H(2)O, generating O(2) and a proton gradient subsequently used for ATP formation. This is Photosystem II CP43 reaction center protein from Carica papaya (Papaya).